The sequence spans 152 residues: Small ribosomal subunit protein uS13 (152 aa).

This sequence belongs to the universal ribosomal protein uS13 family.

It is found in the cytoplasm. Functionally, located at the top of the head of the 40S subunit, it contacts several helices of the 18S rRNA. This chain is Small ribosomal subunit protein uS13 (RPS18), found in Branchiostoma belcheri (Amphioxus).